We begin with the raw amino-acid sequence, 226 residues long: V-type proton ATPase subunit E (226 aa).

Belongs to the V-ATPase E subunit family. V-ATPase is a heteromultimeric enzyme made up of two complexes: the ATP-hydrolytic V1 complex and the proton translocation V0 complex. The V1 complex consists of three catalytic AB heterodimers that form a heterohexamer, three peripheral stalks each consisting of EG heterodimers, one central rotor including subunits D and F, and the regulatory subunits C and H. The proton translocation complex V0 consists of the proton transport subunit a, a ring of proteolipid subunits c9c'', rotary subunit d, subunits e and f, and the accessory subunits VhaAC45 and ATP6AP2.

Functionally, subunit of the V1 complex of vacuolar(H+)-ATPase (V-ATPase), a multisubunit enzyme composed of a peripheral complex (V1) that hydrolyzes ATP and a membrane integral complex (V0) that translocates protons. V-ATPase is responsible for acidifying and maintaining the pH of intracellular compartments and in some cell types, is targeted to the plasma membrane, where it is responsible for acidifying the extracellular environment. This Drosophila melanogaster (Fruit fly) protein is V-type proton ATPase subunit E (Vha26).